The primary structure comprises 116 residues: Iron-sulfur cluster insertion protein ErpA (116 aa).

Iron-sulfur cluster-binding residues include C44, C108, and C110.

The protein belongs to the HesB/IscA family. In terms of assembly, homodimer. It depends on iron-sulfur cluster as a cofactor.

Its function is as follows. Required for insertion of 4Fe-4S clusters for at least IspG. This Pseudomonas fluorescens (strain ATCC BAA-477 / NRRL B-23932 / Pf-5) protein is Iron-sulfur cluster insertion protein ErpA.